A 352-amino-acid chain; its full sequence is V-type ATP synthase subunit C (352 aa).

The protein belongs to the V-ATPase V0D/AC39 subunit family.

Functionally, produces ATP from ADP in the presence of a proton gradient across the membrane. This chain is V-type ATP synthase subunit C (atpC), found in Deinococcus radiodurans (strain ATCC 13939 / DSM 20539 / JCM 16871 / CCUG 27074 / LMG 4051 / NBRC 15346 / NCIMB 9279 / VKM B-1422 / R1).